The chain runs to 1370 residues: MPYSYTEKKRIRKSFAKREDVQNVPFLLATQLQSYLTFLQADTATSDRVNEGLQAAFSSIFPIVSHNGMARLEFVSYALGEPVFDVKECQQRGLTYASPLRAKVRLVLLDREVSKPTIKEVKEQEVYMGEIPLMTGTGSFVINGTERVIVSQLHRSPGVFFEHDRGKTHSSGKLLFSARVIPYRGSWLDFEFDPKDVLFFRVDRRRKMPVTILLKAIGMTPESILAHFFDFDNFELKSEGGMMEFVAERWKGEMARFDIADRDGKVIVEKDKRINAKHLRDLAAGGIQRVSVPEDFLYGRVLAKNIVDPDTGEVVAHANDEITESVLNAMRAANVRDIQTLYTNDLDRGPYISQTLRADETADQMAARVAIYRMMRPGEPPTEEAVEALFQRLFYSEETYDLSRVGRMKVNSRLGRGDDSTGPMTLTNEDILETIKVLVELRNGRGQIDDIDHLGNRRVRCVGELAENQFRAGLVRVERAVKERLGQAETENLMPHDLINSKPISAAIKEFFGSSQLSQFMDQTNPLSEITHKRRVSALGPGGLTRERAGFEVRDVHPTHYGRVCPIETPEGPNIGLINSMALYARLNEYGFLETPYRKIIDGKVSDQIDYLSAIEESHYVIAQANAALDDEGRFVDDLVACREAGETMLTAPGNVHYMDVAPSQIVSVAASLIPFLEHDDANRALMGANMQRQAVPCLRPEKPLVGTGVERTVAVDSGTTVQALRGGVVDHVDADRVVIRVNDEENVAGEVGVDIYNLIKYTRSNQNTNINQRPIVARGDKVAKGDVLADGASTDLGELALGQNMLIAFMPWNGYNFEDSILISERVVADDRYTSIHIEELTVVARDTKLGPEEITRDISNLAETQLNRLDDSGIVYIGAEVSADDVLVGKVTPKGETQLTPEEKLLRAIFGEKASDVKDTSLRVPSGMTGTVIDVQVFTREGIVRDKRAQSIIDDELRRYRQDLNDQLRIVENDQFDRIEKMLVGKAVNGGPRKLAKGATLTKAYLADLDRWQWFDIRLADEQHAVVLEQAKESLEQKRHQFDLAFEEKRKKLTQGDELPPGVLKMIKVYLAVKRRLQPGDKMAGRHGNKGVVSRITPVEDMPHMADGTPADIVLNPLGVPSRMNVGQVLEVHLGWAAKGVGYRIADMLRDERTAQAKSVRGYLEKVYNTTGSSAHIDSLTDEEVLELANNLKKGVPFATPVFDGATEEEIGKMLELAYPDDVAARMRLTASRSQAWLYDGRTGEQFERPVTIGYMHYLKLHHLVDDKMHARSTGPYSLVTQQPLGGKAQFGGQRFGEMEVWALEAYGASYTLQEMLTVKSDDITGRTKVYENIVKGDHVIDAGMPESFNVLVKEIRSLALDMDLERN.

Belongs to the RNA polymerase beta chain family. As to quaternary structure, the RNAP catalytic core consists of 2 alpha, 1 beta, 1 beta' and 1 omega subunit. When a sigma factor is associated with the core the holoenzyme is formed, which can initiate transcription.

The catalysed reaction is RNA(n) + a ribonucleoside 5'-triphosphate = RNA(n+1) + diphosphate. In terms of biological role, DNA-dependent RNA polymerase catalyzes the transcription of DNA into RNA using the four ribonucleoside triphosphates as substrates. The sequence is that of DNA-directed RNA polymerase subunit beta from Bordetella bronchiseptica (strain ATCC BAA-588 / NCTC 13252 / RB50) (Alcaligenes bronchisepticus).